The sequence spans 447 residues: Phosphoglucosamine mutase (447 aa).

The active-site Phosphoserine intermediate is serine 107. Mg(2+)-binding residues include serine 107, aspartate 246, aspartate 248, and aspartate 250. Phosphoserine is present on serine 107.

Belongs to the phosphohexose mutase family. The cofactor is Mg(2+). Activated by phosphorylation.

It carries out the reaction alpha-D-glucosamine 1-phosphate = D-glucosamine 6-phosphate. Catalyzes the conversion of glucosamine-6-phosphate to glucosamine-1-phosphate. The sequence is that of Phosphoglucosamine mutase from Ralstonia nicotianae (strain ATCC BAA-1114 / GMI1000) (Ralstonia solanacearum).